The chain runs to 365 residues: Chorismate synthase (365 aa).

Positions 48 and 54 each coordinate NADP(+). Residues 125–127 (RSS), 238–239 (NA), G278, 293–297 (KPTSS), and R319 contribute to the FMN site.

The protein belongs to the chorismate synthase family. As to quaternary structure, homotetramer. FMNH2 serves as cofactor.

The catalysed reaction is 5-O-(1-carboxyvinyl)-3-phosphoshikimate = chorismate + phosphate. It functions in the pathway metabolic intermediate biosynthesis; chorismate biosynthesis; chorismate from D-erythrose 4-phosphate and phosphoenolpyruvate: step 7/7. Its function is as follows. Catalyzes the anti-1,4-elimination of the C-3 phosphate and the C-6 proR hydrogen from 5-enolpyruvylshikimate-3-phosphate (EPSP) to yield chorismate, which is the branch point compound that serves as the starting substrate for the three terminal pathways of aromatic amino acid biosynthesis. This reaction introduces a second double bond into the aromatic ring system. The chain is Chorismate synthase from Janthinobacterium sp. (strain Marseille) (Minibacterium massiliensis).